The chain runs to 72 residues: Large ribosomal subunit protein uL30 (72 aa).

The protein belongs to the universal ribosomal protein uL30 family. In terms of assembly, part of the 50S ribosomal subunit.

This is Large ribosomal subunit protein uL30 from Mycobacterium ulcerans (strain Agy99).